Here is a 420-residue protein sequence, read N- to C-terminus: FAD-dependent monooxygenase ntnJ (420 aa).

The chain crosses the membrane as a helical span at residues 12–31; that stretch reads FRVIVVGAGIGGLSAAVALA. Positions 41 and 54 each coordinate FAD. An N-linked (GlcNAc...) asparagine glycan is attached at N124. R187 is a catalytic residue. N264 carries an N-linked (GlcNAc...) asparagine glycan. Positions 302 and 315 each coordinate FAD.

Belongs to the paxM FAD-dependent monooxygenase family. The cofactor is FAD.

Its subcellular location is the membrane. It functions in the pathway secondary metabolite biosynthesis; terpenoid biosynthesis. In terms of biological role, FAD-dependent monooxygenase; part of the gene cluster that mediates the biosynthesis of the meroterpenoids nectripenoids A and B, as well as cochliquninone D and isocochliquninone E. The pathway probably begins with the HR-PKS ntnH that catalyzes two chain-extension steps to form a reduced triketide, which then primes the SAT domain in the NR-PKS ntnG to initiate three more cycles of extension to give a linear hexaketide corresponding to the polyketide part of nectripenoids. The FAD-dependent monooxygenase ntnJ then performs an oxidative decarboxylation at C11 of the ntnH/ntnG product, via an electrophilic aromatic hydroxylation with concomitant ipso-decarboxylation. The membrane-bound polyprenyl transferase ntnF then introduces a farnesyl group before the FAD-dependent monooxygenase ntnK functions as the first epoxidase on terminal C12'-C13' olefin, followed by a second epoxidation on C7'-C8' catalyzed by ntnA. The terpene cyclase/mutase ntnI then initiates the sequential tricyclic ring formation through protonation of the terminal epoxide and catalyzes the regioselective and stereoselective 6/6/6-tricyclic ring formation. The cytochrome P450 monooxygenase ntnM may then hydroxylate C1'. In Nectria sp, this protein is FAD-dependent monooxygenase ntnJ.